Consider the following 208-residue polypeptide: High frequency lysogenization protein HflD homolog (208 aa).

This sequence belongs to the HflD family.

The protein localises to the cytoplasm. It localises to the cell inner membrane. The chain is High frequency lysogenization protein HflD homolog from Photorhabdus laumondii subsp. laumondii (strain DSM 15139 / CIP 105565 / TT01) (Photorhabdus luminescens subsp. laumondii).